Consider the following 185-residue polypeptide: Large ribosomal subunit protein uL5 (185 aa).

It belongs to the universal ribosomal protein uL5 family. In terms of assembly, part of the 50S ribosomal subunit; part of the 5S rRNA/L5/L18/L25 subcomplex. Contacts the 5S rRNA and the P site tRNA. Forms a bridge to the 30S subunit in the 70S ribosome.

Functionally, this is one of the proteins that bind and probably mediate the attachment of the 5S RNA into the large ribosomal subunit, where it forms part of the central protuberance. In the 70S ribosome it contacts protein S13 of the 30S subunit (bridge B1b), connecting the 2 subunits; this bridge is implicated in subunit movement. Contacts the P site tRNA; the 5S rRNA and some of its associated proteins might help stabilize positioning of ribosome-bound tRNAs. In Bradyrhizobium sp. (strain ORS 278), this protein is Large ribosomal subunit protein uL5.